A 728-amino-acid polypeptide reads, in one-letter code: Ophiobolin F synthase oblA (728 aa).

The (7Z)-ophiobola-7,19-dien-3-ol synthase stretch occupies residues 1-322 (MEYKYSTIVD…RYHFPGRWNE (322 aa)). Asp-93 and Asp-97 together coordinate Mg(2+). Asp-93 contributes to the substrate binding site. Residues 93 to 97 (DDEID) carry the DDXXD 1 motif. Substrate-binding positions include 182–185 (RCMD), Asn-226, 230–234 (SYEKE), and 313–314 (RY). The NSE/DTE motif lies at 226–234 (NDLFSYEKE). Residues 323–728 (LQKLRAEHGI…LRLMVDMLKV (406 aa)) form a geranylfarnesyl diphosphate synthase region. Residues 362 to 371 (GINGTNGVNG) are compositionally biased toward low complexity. The tract at residues 362–394 (GINGTNGVNGKRNRDEDGDENDARINGNGFKKP) is disordered. The isopentenyl diphosphate site is built by Lys-439, Arg-442, and His-471. The Mg(2+) site is built by Asp-478 and Asp-482. The DDXXD 2 motif lies at 478-482 (DDIED). Arg-487 contacts dimethylallyl diphosphate. Arg-488 contacts isopentenyl diphosphate. The dimethylallyl diphosphate site is built by Lys-565, Thr-566, Gln-604, Asn-611, Lys-621, and Lys-631.

It in the N-terminal section; belongs to the terpene synthase family. In the C-terminal section; belongs to the FPP/GGPP synthase family. Mg(2+) is required as a cofactor.

It catalyses the reaction isopentenyl diphosphate + (2E,6E)-farnesyl diphosphate = (2E,6E,10E)-geranylgeranyl diphosphate + diphosphate. It carries out the reaction isopentenyl diphosphate + (2E,6E,10E)-geranylgeranyl diphosphate = (2E,6E,10E,14E)-geranylfarnesyl diphosphate + diphosphate. The enzyme catalyses (2E,6E,10E,14E)-geranylfarnesyl diphosphate + H2O = ophiobolin F + diphosphate. It functions in the pathway secondary metabolite biosynthesis; terpenoid biosynthesis. In terms of biological role, bifunctional sesterterpene synthase; part of the gene cluster that mediates the biosynthesis of the sesterterpenes ophiobolins, fungal phytotoxins with potential anti-cancer activities. The first step of the pathway is performed by the sesterterpene synthase oblA that possesses both prenyl transferase and terpene cyclase activity, converting isopentenyl diphosphate and dimethylallyl diphosphate into geranylfarnesyl diphosphate (GFPP) and further converting GFPP into ophiobolin F, respectively. Other sesterterpenoids (C(25) terpenoids) are found as minor products of oblA. The cytochrome P450 monooxygenase oblB then catalyzes a four-step oxidative transformation of ophiobolin F to yield ophiobolin C. The function of the cytochrome P450 monooxygenase oblE has still to be determined. In Emericella variicolor (Aspergillus stellatus), this protein is Ophiobolin F synthase oblA.